A 431-amino-acid polypeptide reads, in one-letter code: Enolase (431 aa).

Gln-166 is a (2R)-2-phosphoglycerate binding site. Glu-208 serves as the catalytic Proton donor. Residues Asp-245, Glu-288, and Asp-315 each coordinate Mg(2+). 4 residues coordinate (2R)-2-phosphoglycerate: Lys-340, Arg-369, Ser-370, and Lys-391. Residue Lys-340 is the Proton acceptor of the active site.

It belongs to the enolase family. It depends on Mg(2+) as a cofactor.

It localises to the cytoplasm. The protein localises to the secreted. Its subcellular location is the cell surface. It carries out the reaction (2R)-2-phosphoglycerate = phosphoenolpyruvate + H2O. It participates in carbohydrate degradation; glycolysis; pyruvate from D-glyceraldehyde 3-phosphate: step 4/5. Its function is as follows. Catalyzes the reversible conversion of 2-phosphoglycerate (2-PG) into phosphoenolpyruvate (PEP). It is essential for the degradation of carbohydrates via glycolysis. In Clostridium botulinum (strain Okra / Type B1), this protein is Enolase.